The following is a 460-amino-acid chain: Elongation factor 1-alpha (460 aa).

Glycine 2 carries the post-translational modification N,N,N-trimethylglycine. The residue at position 3 (lysine 3) is an N6,N6-dimethyllysine; alternate. The residue at position 3 (lysine 3) is an N6-methyllysine; alternate. Residues 6–241 (KTHINLVVIG…DAIDPPTRPT (236 aa)) enclose the tr-type G domain. Residues 15–22 (GHVDSGKS) form a G1 region. A GTP-binding site is contributed by 15–22 (GHVDSGKS). Lysine 31 is modified (N6-methyllysine). A G2 region spans residues 71–75 (GITID). Lysine 80 is modified (N6,N6,N6-trimethyllysine). A G3 region spans residues 92-95 (DAPG). Residues 92–96 (DAPGH) and 154–157 (NKMD) each bind GTP. The tract at residues 154 to 157 (NKMD) is G4. The interval 193–195 (SGF) is G5. The residue at position 317 (lysine 317) is an N6,N6-dimethyllysine; alternate. Residue lysine 317 is modified to N6-methyllysine; alternate. The residue at position 391 (lysine 391) is an N6-methyllysine.

It belongs to the TRAFAC class translation factor GTPase superfamily. Classic translation factor GTPase family. EF-Tu/EF-1A subfamily.

The protein resides in the cytoplasm. In terms of biological role, this protein promotes the GTP-dependent binding of aminoacyl-tRNA to the A-site of ribosomes during protein biosynthesis. The chain is Elongation factor 1-alpha (TEF) from Coccidioides immitis (strain RS) (Valley fever fungus).